A 372-amino-acid chain; its full sequence is Oxidoreductase ptaL (372 aa).

The first 16 residues, methionine 1–threonine 16, serve as a signal peptide directing secretion. Residues glycine 8–alanine 12 and arginine 51 contribute to the 6-hydroxy-FAD site. An N-linked (GlcNAc...) asparagine glycan is attached at asparagine 251. Aspartate 285 provides a ligand contact to 6-hydroxy-FAD.

It belongs to the FAD-dependent oxidoreductase family. The cofactor is 6-hydroxy-FAD.

It participates in secondary metabolite biosynthesis. In terms of biological role, oxidoreductase; part of the gene cluster that mediates the biosynthesis of pestheic acid, a diphenyl ether which is a biosynthetic precursor of the unique chloropupukeananes. The biosynthesis initiates from condensation of acetate and malonate units catalyzed by the non-reducing PKS ptaA. As the ptaA protein is TE/CLC domain-deficient, hydrolysis and Claisen cyclization of the polyketide could be catalyzed by ptaB containing a beta-lactamase domain. The ptaB protein might hydrolyze the thioester bond between the ACP of ptaA and the intermediate to release atrochrysone carboxylic acid, which is spontaneously dehydrated to form endocrocin anthrone. Endocrocin anthrone is then converted to endocrocin, catalyzed by the anthrone oxygenase ptaC. Spontaneous decarboxylation of endocrocin occurs to generate emodin. An O-methyltransferase (ptaH or ptaI) could methylate emodin to form physcion. PtaJ could then catalyze the oxidative cleavage of physcion, and rotation of the intermediate could then afford desmethylisosulochrin. PtaF, a putative NADH-dependent oxidoreductase, might also participate in the oxidative cleavage step. Desmethylisosulochrin is then transformed by another O-methyltransferase (ptaH or ptaI) to form isosulochrin. Chlorination of isosulochrin by ptaM in the cyclohexadienone B ring then produces chloroisosulochrin. PtaE is responsible for the oxidative coupling reactions of both benzophenones isosulochrin and chloroisosulochrin to RES-1214-1 and pestheic acid respectively, regardless of chlorination. The protein is Oxidoreductase ptaL of Pestalotiopsis fici (strain W106-1 / CGMCC3.15140).